The primary structure comprises 127 residues: Nuclear transport factor 2 (127 aa).

The 114-residue stretch at 11–124 folds into the NTF2 domain; it reads VGKQFVEHYY…FLLINDFFRL (114 aa).

The protein resides in the cytoplasm. The protein localises to the cytosol. It localises to the nucleus outer membrane. Its subcellular location is the nucleus. It is found in the nuclear pore complex. The protein resides in the nucleus inner membrane. The protein localises to the nucleoplasm. Its function is as follows. Mediates the import of GDP-bound RAN from the cytoplasm into the nucleus which is essential for the function of RAN in cargo receptor-mediated nucleocytoplasmic transport. Thereby, plays indirectly a more general role in cargo receptor-mediated nucleocytoplasmic transport. Interacts with GDP-bound RAN in the cytosol, recruits it to the nuclear pore complex via its interaction with nucleoporins and promotes its nuclear import. This is Nuclear transport factor 2 from Dictyostelium discoideum (Social amoeba).